A 412-amino-acid chain; its full sequence is MSRRKQTNPNKVHWDQVFAGLEEQARQAMMKTDFPGDLGSQRQAIQQLRDQDSSSSDSEGDEEETTQDEVSSHTSEEDGGVVKVEKELENTEQPVGGNEVVEHEVTGNLNSDPLLELCQCPLCQLDCGSREQLIAHVYQHTAAVVSAKSYMCPVCGRALSSPGSLGRHLLIHSEDQRSNCAVCGARFTSHATFNSEKLPEVLNMESLPTVHNEGPSSAEGKDIAFSPPVYPAGILLVCNNCAAYRKLLEAQTPSVRKWALRRQNEPLEVRLQRLERERTAKKSRRDNETPEEREVRRMRDREAKRLQRMQETDEQRARRLQRDREAMRLKRANETPEKRQARLIREREAKRLKRRLEKMDMMLRAQFGQDPSAMAALAAEMNFFQLPVSGVELDSQLLGKMAFEEQNSSSLH.

A disordered region spans residues 26 to 83 (RQAMMKTDFPGDLGSQRQAIQQLRDQDSSSSDSEGDEEETTQDEVSSHTSEEDGGVVK). A compositionally biased stretch (acidic residues) spans 58–67 (SEGDEEETTQ). C2H2-type zinc fingers lie at residues 116 to 140 (ELCQ…VYQH) and 150 to 172 (YMCP…LLIH). The stretch at 257 to 366 (KWALRRQNEP…EKMDMMLRAQ (110 aa)) forms a coiled coil. A disordered region spans residues 278–319 (RTAKKSRRDNETPEEREVRRMRDREAKRLQRMQETDEQRARR).

Belongs to the krueppel C2H2-type zinc-finger protein family.

The protein resides in the nucleus. In terms of biological role, may be involved in transcriptional regulation. The protein is Zinc finger protein 821 (ZNF821) of Homo sapiens (Human).